The primary structure comprises 235 residues: Purine nucleoside phosphorylase DeoD-type (235 aa).

Residue His4 participates in a purine D-ribonucleoside binding. Phosphate is bound by residues Gly20, Arg24, Arg43, and Arg87–Thr90. A purine D-ribonucleoside-binding positions include Glu162, Glu179–Glu181, and Ser203–Asp204. Asp204 (proton donor) is an active-site residue.

Belongs to the PNP/UDP phosphorylase family. In terms of assembly, homohexamer; trimer of homodimers.

The enzyme catalyses a purine D-ribonucleoside + phosphate = a purine nucleobase + alpha-D-ribose 1-phosphate. The catalysed reaction is a purine 2'-deoxy-D-ribonucleoside + phosphate = a purine nucleobase + 2-deoxy-alpha-D-ribose 1-phosphate. In terms of biological role, catalyzes the reversible phosphorolytic breakdown of the N-glycosidic bond in the beta-(deoxy)ribonucleoside molecules, with the formation of the corresponding free purine bases and pentose-1-phosphate. The protein is Purine nucleoside phosphorylase DeoD-type of Bacillus cereus (strain B4264).